An 832-amino-acid chain; its full sequence is Cadherin-17 (832 aa).

Residues 1–22 (MILQAHLHSLCLLMLYLATGYG) form the signal peptide. Residues 23–787 (QEGKFSGPLK…HQTGIPTVGM (765 aa)) are Extracellular-facing. 7 consecutive Cadherin domains span residues 30-128 (PLKP…TFLQ), 129-244 (SKYE…APKP), 245-340 (VEMV…PPTC), 341-449 (PSPV…IPIF), 450-566 (EKSD…APQF), 567-667 (SQHV…PPRL), and 668-777 (AKDY…RPAG). Residues asparagine 149, asparagine 184, asparagine 250, asparagine 419, asparagine 456, asparagine 546, asparagine 587, and asparagine 722 are each glycosylated (N-linked (GlcNAc...) asparagine). A helical transmembrane segment spans residues 788-808 (AVGILLTTLLVIGIILAVVFI). The Cytoplasmic segment spans residues 809–832 (RIKKDKGKDNVESAQASEVKPLRS).

Expressed in the gastrointestinal tract and pancreatic duct. Not detected in kidney, lung, liver, brain, adrenal gland and skin.

The protein localises to the cell membrane. Cadherins are calcium-dependent cell adhesion proteins. They preferentially interact with themselves in a homophilic manner in connecting cells; cadherins may thus contribute to the sorting of heterogeneous cell types. LI-cadherin may have a role in the morphological organization of liver and intestine. Involved in intestinal peptide transport. In Homo sapiens (Human), this protein is Cadherin-17 (CDH17).